Consider the following 664-residue polypeptide: Putative carboxypeptidase suro-1 (664 aa).

The N-terminal stretch at 1 to 23 (MRYLCKSILLAVHTILLVGSVCC) is a signal peptide. Residues 24 to 110 (STDVHNTDDK…MSVPDVEKLI (87 aa)) constitute a propeptide, activation peptide. The region spanning 160 to 473 (DYASYADMVK…EGFREVVDAV (314 aa)) is the Peptidase M14 domain. Zn(2+) contacts are provided by histidine 219 and glutamate 222. Substrate is bound by residues 219-222 (HARE), arginine 281, and 306-307 (NR). Histidine 361 contacts Zn(2+). A substrate-binding site is contributed by 362–363 (SY). Residue glutamate 437 is the Proton donor/acceptor of the active site. Low complexity predominate over residues 512-543 (ASQAAGSTTRSTTTLKTSTTSVSTTSEATSPS). Residues 512-590 (ASQAAGSTTR…TTTTEEEDVT (79 aa)) are disordered. Pro residues predominate over residues 564 to 573 (PTPPMAPPIM). Over residues 574-583 (SPSTEFSTTT) the composition is skewed to low complexity. The ShKT domain occupies 621–657 (CRDMRYSCGFWLKNNKQVCEEQQSFMRAQCAYTCKFC). Cystine bridges form between cysteine 621–cysteine 657, cysteine 628–cysteine 650, and cysteine 639–cysteine 654.

The protein belongs to the peptidase M14 family. Zn(2+) serves as cofactor. In terms of tissue distribution, localizes in stripes along the cuticle.

It localises to the cytoplasmic vesicle. Its subcellular location is the secreted. Its function is as follows. May play a role in processing or organization of cuticle collagen proteins, including rol-6 and col-19. The chain is Putative carboxypeptidase suro-1 from Caenorhabditis elegans.